The chain runs to 440 residues: tRNA(Ile)-lysidine synthase (440 aa).

29 to 34 (SGGLDS) contacts ATP.

The protein belongs to the tRNA(Ile)-lysidine synthase family.

The protein localises to the cytoplasm. The enzyme catalyses cytidine(34) in tRNA(Ile2) + L-lysine + ATP = lysidine(34) in tRNA(Ile2) + AMP + diphosphate + H(+). Its function is as follows. Ligates lysine onto the cytidine present at position 34 of the AUA codon-specific tRNA(Ile) that contains the anticodon CAU, in an ATP-dependent manner. Cytidine is converted to lysidine, thus changing the amino acid specificity of the tRNA from methionine to isoleucine. This is tRNA(Ile)-lysidine synthase from Pectobacterium atrosepticum (strain SCRI 1043 / ATCC BAA-672) (Erwinia carotovora subsp. atroseptica).